A 212-amino-acid chain; its full sequence is Small ribosomal subunit protein uS5 (212 aa).

The S5 DRBM domain occupies 48–111 (LDDEVLDINM…EVAKLNIIDV (64 aa)).

It belongs to the universal ribosomal protein uS5 family. As to quaternary structure, part of the 30S ribosomal subunit. Contacts protein S4.

Its function is as follows. With S4 and S12 plays an important role in translational accuracy. The protein is Small ribosomal subunit protein uS5 of Halobacterium salinarum (strain ATCC 700922 / JCM 11081 / NRC-1) (Halobacterium halobium).